A 198-amino-acid chain; its full sequence is Recombination protein RecR (198 aa).

The C4-type zinc finger occupies 57-72 (CSICGNLTDDDPCHIC). The 96-residue stretch at 80-175 (ETILVVEASK…KVTRLARGLA (96 aa)) folds into the Toprim domain.

It belongs to the RecR family.

In terms of biological role, may play a role in DNA repair. It seems to be involved in an RecBC-independent recombinational process of DNA repair. It may act with RecF and RecO. The protein is Recombination protein RecR of Streptococcus equi subsp. zooepidemicus (strain MGCS10565).